The chain runs to 1112 residues: Constitutive coactivator of PPAR-gamma-like protein 1 (1112 aa).

An interaction with YES1, SRC and FYN region spans residues Pro339–Leu403. Residues Gln372–Gln525 are disordered. Polar residues-rich tracts occupy residues Leu403–Asn418 and Ser433–His445. Residues Gly479–Lys500 are compositionally biased toward basic and acidic residues. Polar residues predominate over residues Gly503 to Gln512. Position 653 is a phosphothreonine (Thr653). The segment at Ala827–Glu1112 is RNA binding. Omega-N-methylarginine occurs at positions 871, 882, and 884. Residues Ala919 to Gly943 form a disordered region. A compositionally biased stretch (polar residues) spans Gly922–Gly934. Lys930 is subject to N6-acetyllysine. Position 958 is a phosphoserine (Ser958). Omega-N-methylarginine occurs at positions 980 and 984. Phosphoserine is present on residues Ser1021 and Ser1042. Residues Lys1030 to Ala1090 form a disordered region. Residues His1070–Ala1090 are compositionally biased toward polar residues.

It belongs to the constitutive coactivator of PPAR-gamma family. As to quaternary structure, interacts with PURA. Interacts with SRC family protein kinases YES1, SRC and FYN. Upon tyrosine phosphorylation, interacts with PIK3R1. Interacts with IGF2BP1/IMP-1 in an RNA-dependent manner. Post-translationally, arg-980 is dimethylated, probably to asymmetric dimethylarginine. Phosphorylated on tyrosine by src family kinases upon ultraviolet exposure. In the brain, predominantly expressed in the hippocampus, caudate putamen, cerebral cortex and cerebellum. Expression is restricted to neurons (at protein level).

It localises to the cytoplasm. The protein resides in the cell membrane. In terms of biological role, component of the oxidative stress-induced survival signaling. May regulate the activation of SRC family protein kinases. May act as a scaffolding protein enabling SRC family protein kinases to phosphorylate and activate PI3-kinase. Binds IGF2 RNA and promotes the production of IGF2 protein. This is Constitutive coactivator of PPAR-gamma-like protein 1 (FAM120A) from Mus musculus (Mouse).